A 396-amino-acid chain; its full sequence is L-lactate dehydrogenase (396 aa).

The FMN hydroxy acid dehydrogenase domain maps to 1 to 380 (MIISAASDYR…TQDSLVQGLG (380 aa)). Y24 provides a ligand contact to substrate. S106 and Q127 together coordinate FMN. Y129 contributes to the substrate binding site. Position 155 (T155) interacts with FMN. A substrate-binding site is contributed by R164. K251 lines the FMN pocket. H275 serves as the catalytic Proton acceptor. Position 278 (R278) interacts with substrate. 306–330 (DSGIRNGLDVVRMIALGADTVLLGR) lines the FMN pocket.

This sequence belongs to the FMN-dependent alpha-hydroxy acid dehydrogenase family. The cofactor is FMN.

It is found in the cell inner membrane. The enzyme catalyses (S)-lactate + A = pyruvate + AH2. Functionally, catalyzes the conversion of L-lactate to pyruvate. Is coupled to the respiratory chain. This chain is L-lactate dehydrogenase, found in Shigella boydii serotype 18 (strain CDC 3083-94 / BS512).